The sequence spans 359 residues: Membrane-bound lytic murein transglycosylase C (359 aa).

Residues 1–16 (MKKYLALALIAPLLIS) form the signal peptide. The N-palmitoyl cysteine moiety is linked to residue cysteine 17. A lipid anchor (S-diacylglycerol cysteine) is attached at cysteine 17.

Belongs to the transglycosylase Slt family.

It is found in the cell outer membrane. It catalyses the reaction Exolytic cleavage of the (1-&gt;4)-beta-glycosidic linkage between N-acetylmuramic acid (MurNAc) and N-acetylglucosamine (GlcNAc) residues in peptidoglycan, from either the reducing or the non-reducing ends of the peptidoglycan chains, with concomitant formation of a 1,6-anhydrobond in the MurNAc residue.. Its function is as follows. Murein-degrading enzyme. May play a role in recycling of muropeptides during cell elongation and/or cell division. The chain is Membrane-bound lytic murein transglycosylase C from Escherichia coli O8 (strain IAI1).